We begin with the raw amino-acid sequence, 49 residues long: Large ribosomal subunit protein bL33C (49 aa).

It belongs to the bacterial ribosomal protein bL33 family.

The sequence is that of Large ribosomal subunit protein bL33C from Bacillus pumilus (strain SAFR-032).